Consider the following 71-residue polypeptide: Protein CYSTEINE-RICH TRANSMEMBRANE MODULE 3 (71 aa).

A disordered region spans residues 30–49; it reads VMMKDSPQTVQPPHEGQSKG. A helical membrane pass occupies residues 48 to 64; the sequence is KGSGGFLRGCLAAMCCC.

This sequence belongs to the CYSTM1 family. As to quaternary structure, heterodimers. Interacts with CYSTM7 and WIH1/CYSTM13. In terms of tissue distribution, mostly expressed in leaves and flowers and, to a lower extent, in stems, siliques, shoots and roots.

Its subcellular location is the cell membrane. The protein resides in the cytoplasm. The protein localises to the mitochondrion. Its function is as follows. Negatively regulates salt stress responses and Na(+) homeostasis. Prevents Na(+) efflux, disturbs reactive oxygen species (ROS) homeostasis, and represses the expression of nuclear salt stress-responsive genes. Involved in resistance to abiotic stress. The protein is Protein CYSTEINE-RICH TRANSMEMBRANE MODULE 3 of Arabidopsis thaliana (Mouse-ear cress).